Reading from the N-terminus, the 210-residue chain is Guanylate kinase (210 aa).

The Guanylate kinase-like domain occupies 6–186; it reads GVILVLSSPS…TADRISNILR (181 aa). 13-20 provides a ligand contact to ATP; that stretch reads SPSGCGKT.

This sequence belongs to the guanylate kinase family.

It is found in the cytoplasm. The enzyme catalyses GMP + ATP = GDP + ADP. Its function is as follows. Essential for recycling GMP and indirectly, cGMP. This chain is Guanylate kinase, found in Anaplasma phagocytophilum (strain HZ).